Consider the following 550-residue polypeptide: Hydroxylamine reductase (550 aa).

[2Fe-2S] cluster-binding residues include Cys4, Cys7, Cys19, and Cys26. His249, Glu273, Cys317, Cys405, Cys433, Cys458, Glu492, and Lys494 together coordinate hybrid [4Fe-2O-2S] cluster. The residue at position 405 (Cys405) is a Cysteine persulfide.

The protein belongs to the HCP family. [2Fe-2S] cluster serves as cofactor. Requires hybrid [4Fe-2O-2S] cluster as cofactor.

The protein resides in the cytoplasm. It carries out the reaction A + NH4(+) + H2O = hydroxylamine + AH2 + H(+). Its function is as follows. Catalyzes the reduction of hydroxylamine to form NH(3) and H(2)O. In Aeromonas salmonicida (strain A449), this protein is Hydroxylamine reductase.